A 778-amino-acid chain; its full sequence is Endonuclease MutS2 (778 aa).

332-339 (GPNTGGKT) contacts ATP. A Smr domain is found at 703 to 778 (IDLRGKMVDE…GLGCTVVTLK (76 aa)).

This sequence belongs to the DNA mismatch repair MutS family. MutS2 subfamily. Homodimer. Binds to stalled ribosomes, contacting rRNA.

In terms of biological role, endonuclease that is involved in the suppression of homologous recombination and thus may have a key role in the control of bacterial genetic diversity. Functionally, acts as a ribosome collision sensor, splitting the ribosome into its 2 subunits. Detects stalled/collided 70S ribosomes which it binds and splits by an ATP-hydrolysis driven conformational change. Acts upstream of the ribosome quality control system (RQC), a ribosome-associated complex that mediates the extraction of incompletely synthesized nascent chains from stalled ribosomes and their subsequent degradation. Probably generates substrates for RQC. The polypeptide is Endonuclease MutS2 (Fusobacterium nucleatum subsp. nucleatum (strain ATCC 25586 / DSM 15643 / BCRC 10681 / CIP 101130 / JCM 8532 / KCTC 2640 / LMG 13131 / VPI 4355)).